The primary structure comprises 477 residues: UDP-N-acetylmuramate--L-alanine ligase (477 aa).

122–128 (GTHGKTT) contributes to the ATP binding site.

Belongs to the MurCDEF family.

It localises to the cytoplasm. It catalyses the reaction UDP-N-acetyl-alpha-D-muramate + L-alanine + ATP = UDP-N-acetyl-alpha-D-muramoyl-L-alanine + ADP + phosphate + H(+). The protein operates within cell wall biogenesis; peptidoglycan biosynthesis. Functionally, cell wall formation. The chain is UDP-N-acetylmuramate--L-alanine ligase from Xylella fastidiosa (strain M23).